We begin with the raw amino-acid sequence, 311 residues long: Bifunctional protein FolD (311 aa).

Glycine 174–glycine 176 contacts NADP(+).

Belongs to the tetrahydrofolate dehydrogenase/cyclohydrolase family. As to quaternary structure, homodimer.

It catalyses the reaction (6R)-5,10-methylene-5,6,7,8-tetrahydrofolate + NADP(+) = (6R)-5,10-methenyltetrahydrofolate + NADPH. The catalysed reaction is (6R)-5,10-methenyltetrahydrofolate + H2O = (6R)-10-formyltetrahydrofolate + H(+). It functions in the pathway one-carbon metabolism; tetrahydrofolate interconversion. Functionally, catalyzes the oxidation of 5,10-methylenetetrahydrofolate to 5,10-methenyltetrahydrofolate and then the hydrolysis of 5,10-methenyltetrahydrofolate to 10-formyltetrahydrofolate. In Pyrobaculum neutrophilum (strain DSM 2338 / JCM 9278 / NBRC 100436 / V24Sta) (Thermoproteus neutrophilus), this protein is Bifunctional protein FolD.